Here is a 543-residue protein sequence, read N- to C-terminus: UBP9-binding protein bun62 (543 aa).

Ser43 carries the post-translational modification Phosphoserine. 5 WD repeats span residues 239-279 (LNSS…QPLH), 320-361 (FSKS…DVFH), 362-401 (SYFA…LVAR), 404-448 (GHKS…IHRP), and 513-542 (VDDS…TWQR).

In terms of assembly, interacts with ubp9 and bun107.

The protein localises to the nucleus. The protein resides in the cytoplasm. It localises to the cell tip. In terms of biological role, required for the ubp9 recruitment to septa and cell tips but also for its enzymatic activity at these specific locations. The chain is UBP9-binding protein bun62 (bun62) from Schizosaccharomyces pombe (strain 972 / ATCC 24843) (Fission yeast).